The chain runs to 640 residues: Chaperone protein DnaK (640 aa).

T199 carries the post-translational modification Phosphothreonine; by autocatalysis. Residues 606 to 621 (QQAAGAGAQQADGTGK) are compositionally biased toward low complexity. Residues 606–640 (QQAAGAGAQQADGTGKAADDGVVDAEFEEVKEDNK) are disordered. Positions 626–640 (GVVDAEFEEVKEDNK) are enriched in acidic residues.

This sequence belongs to the heat shock protein 70 family.

Its function is as follows. Acts as a chaperone. The sequence is that of Chaperone protein DnaK from Cellvibrio japonicus (strain Ueda107) (Pseudomonas fluorescens subsp. cellulosa).